The following is a 228-amino-acid chain: Ran-binding protein 1 homolog a (228 aa).

A compositionally biased stretch (basic and acidic residues) spans 1–13 (MATNEPEHEHRDE). Disordered stretches follow at residues 1–30 (MATN…QVAP) and 159–228 (SEEE…GPST). Over residues 14–24 (EEAGANEDEDT) the composition is skewed to acidic residues. The RanBD1 domain occupies 27–162 (QVAPIVRLEE…FKEVAESEEE (136 aa)). Positions 179-228 (LTVEETKTEEKTEAKAVETAKTEVKAEEKKESEAEKSGEAKKTEESGPST) are enriched in basic and acidic residues.

Interacts with the GTP-bound form of RAN1, RAN2 and RAN3. In terms of tissue distribution, ubiquitous. Preferentially expressed in root tips and gynoecium.

Its subcellular location is the nucleus. It is found in the nuclear pore complex. This is Ran-binding protein 1 homolog a (RANBP1A) from Arabidopsis thaliana (Mouse-ear cress).